The following is a 151-amino-acid chain: Putative pre-16S rRNA nuclease (151 aa).

Belongs to the YqgF nuclease family.

Its subcellular location is the cytoplasm. Its function is as follows. Could be a nuclease involved in processing of the 5'-end of pre-16S rRNA. This Gloeothece citriformis (strain PCC 7424) (Cyanothece sp. (strain PCC 7424)) protein is Putative pre-16S rRNA nuclease.